We begin with the raw amino-acid sequence, 533 residues long: Glucose-6-phosphate isomerase (533 aa).

The active-site Proton donor is the Glu-341. Active-site residues include His-372 and Lys-501.

It belongs to the GPI family.

It is found in the cytoplasm. The enzyme catalyses alpha-D-glucose 6-phosphate = beta-D-fructose 6-phosphate. Its pathway is carbohydrate biosynthesis; gluconeogenesis. It participates in carbohydrate degradation; glycolysis; D-glyceraldehyde 3-phosphate and glycerone phosphate from D-glucose: step 2/4. Catalyzes the reversible isomerization of glucose-6-phosphate to fructose-6-phosphate. The polypeptide is Glucose-6-phosphate isomerase (Cereibacter sphaeroides (strain ATCC 17023 / DSM 158 / JCM 6121 / CCUG 31486 / LMG 2827 / NBRC 12203 / NCIMB 8253 / ATH 2.4.1.) (Rhodobacter sphaeroides)).